A 356-amino-acid polypeptide reads, in one-letter code: NADH-quinone oxidoreductase subunit H (356 aa).

A run of 8 helical transmembrane segments spans residues 18–38, 87–107, 120–140, 166–186, 202–222, 265–285, 292–312, and 328–348; these read IVMVAQSVLLLVVLLIAIAYI, GVFLLAPLVTCVLALAAWAVI, VGILYIFAISSLSIYGIIMAG, IGFVFITVLLCAGSLNLSAIV, WLTFLNWYWLPLLPMFVVFYV, AITTMCAMGAILFMGGWLPPI, WVPGVIWFSLKLFFMFFLFAM, and LGWKVFLPLSLAMVVIVAGVL.

Belongs to the complex I subunit 1 family. As to quaternary structure, NDH-1 is composed of 14 different subunits. Subunits NuoA, H, J, K, L, M, N constitute the membrane sector of the complex.

The protein localises to the cell inner membrane. The enzyme catalyses a quinone + NADH + 5 H(+)(in) = a quinol + NAD(+) + 4 H(+)(out). NDH-1 shuttles electrons from NADH, via FMN and iron-sulfur (Fe-S) centers, to quinones in the respiratory chain. The immediate electron acceptor for the enzyme in this species is believed to be ubiquinone. Couples the redox reaction to proton translocation (for every two electrons transferred, four hydrogen ions are translocated across the cytoplasmic membrane), and thus conserves the redox energy in a proton gradient. This subunit may bind ubiquinone. The polypeptide is NADH-quinone oxidoreductase subunit H (Nitrobacter hamburgensis (strain DSM 10229 / NCIMB 13809 / X14)).